The sequence spans 256 residues: L-tyrosine degradation gene cluster protein hmgX (256 aa).

This sequence belongs to the TTC36 family.

The protein resides in the cytoplasm. Its function is as follows. Part of the L-tyrosine degradation gene cluster that mediates the biosynthesis of the brownish pigment pyomelanin as an alternative melanin. The 4-hydroxyphenylpyruvate dioxygenase hppD catalyzes the conversion of 4-hydroxyphenylpyruvate to homogentisic acid (HGA). The protein hmgX is crucial for this conversion and thus, probably functions as an accessory factor to mediate specific activity of hppD. The homogentisate 1,2-dioxygenase hmgA is then involved in the cleavage of the aromatic ring of HGA and its conversion to 4-maleylacetoacetate. When hmgA activity is lowered by the cell wall integrity (CWI) signaling pathway, HGA accumulates and leads to the production of pyomelanin through benzoquinone acetic acid after oxidation and polymerization. On the opposite, in non-stress conditions, both hppD and hmgA activities are balanced and HGA is degraded into 4-maleylacetoacetate. 4-maleylacetoacetate is further converted to 4-fumarylacetoacetate by the maleylacetoacetate isomerase maiA, which is degraded into fumarate and acetoacetate by the fumarylacetoacetase fahA. This is L-tyrosine degradation gene cluster protein hmgX from Aspergillus fumigatus (strain ATCC MYA-4609 / CBS 101355 / FGSC A1100 / Af293) (Neosartorya fumigata).